The chain runs to 285 residues: Bifunctional protein FolD (285 aa).

NADP(+) contacts are provided by residues 166–168 (GAS) and Ile232.

The protein belongs to the tetrahydrofolate dehydrogenase/cyclohydrolase family. As to quaternary structure, homodimer.

The enzyme catalyses (6R)-5,10-methylene-5,6,7,8-tetrahydrofolate + NADP(+) = (6R)-5,10-methenyltetrahydrofolate + NADPH. It catalyses the reaction (6R)-5,10-methenyltetrahydrofolate + H2O = (6R)-10-formyltetrahydrofolate + H(+). The protein operates within one-carbon metabolism; tetrahydrofolate interconversion. Catalyzes the oxidation of 5,10-methylenetetrahydrofolate to 5,10-methenyltetrahydrofolate and then the hydrolysis of 5,10-methenyltetrahydrofolate to 10-formyltetrahydrofolate. This chain is Bifunctional protein FolD, found in Pseudoalteromonas atlantica (strain T6c / ATCC BAA-1087).